We begin with the raw amino-acid sequence, 164 residues long: Large ribosomal subunit protein eL24 (164 aa).

Disordered stretches follow at residues 63-82 (KDAAQEAVKKRRRATKKPYS) and 117-164 (ERIK…GGKA). Residues 71–81 (KKRRRATKKPY) show a composition bias toward basic residues. Basic and acidic residues predominate over residues 117-133 (ERIKKTKDEKKAKKAEV).

It belongs to the eukaryotic ribosomal protein eL24 family.

The protein localises to the cytoplasm. The chain is Large ribosomal subunit protein eL24 (RPL24) from Cicer arietinum (Chickpea).